Reading from the N-terminus, the 189-residue chain is CASP-like protein 1F2 (189 aa).

At 1–27 the chain is on the cytoplasmic side; that stretch reads MESLEVANGKSSALGVSREASSPPQMG. The helical transmembrane segment at 28–48 threads the bilayer; the sequence is FFIAQVVLRFFTLAFTGAAIA. At 49–77 the chain is on the extracellular side; that stretch reads VMVTAKETVEVFSISFTVRYSYLSAFKFL. A helical transmembrane segment spans residues 78-98; sequence VGADAVVCGFSMLSLIFVSIF. The Cytoplasmic segment spans residues 99-113; the sequence is NKGKSNHYFFLYFHD. A helical membrane pass occupies residues 114-134; sequence LILMVLSMSACAAATAVGYVG. Residues 135 to 156 lie on the Extracellular side of the membrane; sequence RYGQDKAAWMAVCGNVKMFCDK. Residues 157 to 177 traverse the membrane as a helical segment; the sequence is ALASILLSLIGFICLFLLTIM. Residues 178–189 lie on the Cytoplasmic side of the membrane; the sequence is AARNLRVSGHLI.

Belongs to the Casparian strip membrane proteins (CASP) family. In terms of assembly, homodimer and heterodimers.

It is found in the cell membrane. This chain is CASP-like protein 1F2, found in Vitis vinifera (Grape).